The chain runs to 360 residues: Tubulin-like protein CetZ2 (360 aa).

GTP-binding positions include 10-14 (QAGGK), 65-66 (GG), 106-108 (GSG), Glu138, Asn165, and Asn183. Basic and acidic residues predominate over residues 334–354 (EAIDKAETEPREDPKGMWHSD). Residues 334 to 360 (EAIDKAETEPREDPKGMWHSDDLDDLL) are disordered.

Belongs to the CetZ family.

It localises to the cytoplasm. In terms of biological role, involved in cell shape control. The sequence is that of Tubulin-like protein CetZ2 from Haloferax volcanii (strain ATCC 29605 / DSM 3757 / JCM 8879 / NBRC 14742 / NCIMB 2012 / VKM B-1768 / DS2) (Halobacterium volcanii).